The chain runs to 1806 residues: Focadhesin (1806 aa).

The interval 733–760 (ARPIPKQPEVEDEVKQNEEENEEEEDIS) is disordered.

The protein resides in the cell junction. The protein localises to the focal adhesion. It is found in the cytoplasm. It localises to the cytosol. Functionally, required for the maintenance of SKIC2 and SKIC3 proteostatic levels in the liver. May be involved in the regulation of RNA degradation by the exosome complex. The polypeptide is Focadhesin (focad) (Danio rerio (Zebrafish)).